The sequence spans 72 residues: Sec-independent protein translocase protein TatA (72 aa).

Residues 1-21 (MGSFSIWHWLIVLAVVLLLFG) form a helical membrane-spanning segment. The interval 43 to 72 (MADEDAKEDPRTIDAKAEEPVKDVKKTTKS) is disordered. The segment covering 50–72 (EDPRTIDAKAEEPVKDVKKTTKS) has biased composition (basic and acidic residues).

This sequence belongs to the TatA/E family. In terms of assembly, the Tat system comprises two distinct complexes: a TatABC complex, containing multiple copies of TatA, TatB and TatC subunits, and a separate TatA complex, containing only TatA subunits. Substrates initially bind to the TatABC complex, which probably triggers association of the separate TatA complex to form the active translocon.

The protein resides in the cell inner membrane. Part of the twin-arginine translocation (Tat) system that transports large folded proteins containing a characteristic twin-arginine motif in their signal peptide across membranes. TatA could form the protein-conducting channel of the Tat system. The protein is Sec-independent protein translocase protein TatA of Brucella suis biovar 1 (strain 1330).